The chain runs to 306 residues: Mitochondrial brown fat uncoupling protein 1 (306 aa).

Over 1 to 10 the chain is Mitochondrial intermembrane; that stretch reads MVGTTATDVA. A helical transmembrane segment spans residues 11–32; sequence PTMGVKIFSAGVAACLADVITF. Solcar repeat units follow at residues 11–102, 110–200, and 209–294; these read PTMG…VQEF, PSLR…MKGA, and DDVP…LKRE. Residues 33–73 lie on the Mitochondrial matrix side of the membrane; that stretch reads PLDTAKVRLQIQGECQTTSGIRYKGVLGTITTLAKTEGPLK. K56 contacts fatty acid 16:0. Residues 74-96 form a helical membrane-spanning segment; that stretch reads LYSGLPAGLQRQISFASLRIGLY. Topologically, residues 97-115 are mitochondrial intermembrane; it reads DTVQEFWGGEEATPSLRSK. A helical membrane pass occupies residues 116–132; it reads ICAGLTTGGVAVFIGQP. Topologically, residues 133 to 177 are mitochondrial matrix; it reads TEVVKVRLQAQSHLHGLKPRYTGTYNAYRIIATTESLSTLWKGTT. A helical membrane pass occupies residues 178–194; sequence PNLLRNIIINCTELVTY. Over 195–211 the chain is Mitochondrial intermembrane; the sequence is DLMKGALVRNDILADDV. Residues 212-231 form a helical membrane-spanning segment; it reads PCHLLSALIAGFCTTLLSSP. Residues 232–265 lie on the Mitochondrial matrix side of the membrane; that stretch reads VDVVKTRFINSPQGQYTSVPSCAMSMLTKEGPTA. At C253 the chain carries Cysteine sulfenic acid (-SOH). A helical membrane pass occupies residues 266-288; sequence FFKGFAPSFLRLASWNVIMFVCF. K268 lines the fatty acid 16:0 pocket. Over 289-306 the chain is Mitochondrial intermembrane; that stretch reads EKLKRELMKSRQTVDCAT.

It belongs to the mitochondrial carrier (TC 2.A.29) family. Most probably functions as a monomer. Binds one purine nucleotide per monomer. However, has also been suggested to function as a homodimer or a homotetramer. Tightly associates with cardiolipin in the mitochondrion inner membrane; may stabilize and regulate its activity. Post-translationally, may undergo sulfenylation upon cold exposure. May increase the sensitivity of UCP1 thermogenic function to the activation by noradrenaline probably through structural effects. In terms of processing, may undergo ubiquitin-mediated proteasomal degradation.

The protein resides in the mitochondrion inner membrane. It carries out the reaction H(+)(in) = H(+)(out). Its activity is regulated as follows. Has no constitutive proton transporter activity and has to be activated by long-chain fatty acids/LCFAs. Inhibited by purine nucleotides. Both purine nucleotides and LCFAs bind the cytosolic side of the transporter and directly compete to activate or inhibit it. Activated by noradrenaline and reactive oxygen species. Despite lacking canonical translational encoding for selenocysteine, a small pool of the protein has been observed to selectively incorporate selenocysteine at 'Cys-253'. Selenocysteine-modified protein is highly sensitive to redox modification and may constitute a pool of protein highly sensitive to activation by elevated levels of reactive oxygen species (ROS). In terms of biological role, mitochondrial protein responsible for thermogenic respiration, a specialized capacity of brown adipose tissue and beige fat that participates in non-shivering adaptive thermogenesis to temperature and diet variations and more generally to the regulation of energy balance. Functions as a long-chain fatty acid/LCFA and proton symporter, simultaneously transporting one LCFA and one proton through the inner mitochondrial membrane. However, LCFAs remaining associated with the transporter via their hydrophobic tails, it results in an apparent transport of protons activated by LCFAs. Thereby, dissipates the mitochondrial proton gradient and converts the energy of substrate oxydation into heat instead of ATP. Regulates the production of reactive oxygen species/ROS by mitochondria. The protein is Mitochondrial brown fat uncoupling protein 1 of Ochotona dauurica (Daurian pika).